Reading from the N-terminus, the 812-residue chain is Probable inorganic carbon transporter subunit DabA (812 aa).

Zn(2+) contacts are provided by Cys-338, Asp-340, His-498, and Cys-513.

The protein belongs to the inorganic carbon transporter (TC 9.A.2) DabA family. As to quaternary structure, forms a complex with DabB. Requires Zn(2+) as cofactor.

The protein localises to the cell inner membrane. Functionally, part of an energy-coupled inorganic carbon pump. The sequence is that of Probable inorganic carbon transporter subunit DabA from Methylobacterium sp. (strain 4-46).